A 543-amino-acid chain; its full sequence is MKTTPLSIQTTNKLVTNYKNNDASVMKYFDYSSIHYEQERLAYLNNRTYKRQDFVKAVHKLHKKWGAPEASMEKLNKLVDEQAVAVVGGQQAGLLSGPLYSIHKVISVIQLAKEQEKKLGIPVVPIFWIAGEDHDFDEINHTYVPTTDMKMKKVKLQNKSIDAGRKSVTDLEFEKDKLREWVEDVFLSLKETDYTQDIHSLVQTVLSESDSYSEFFAKFIFQLFPDQGIVLLDSHASEIREIETDFFLEMIEHQQGISSAVKSTIDELKAEEYSISLDALDGDAHLFYHDEQLGRVLLQVDPDGMWVDKQHNMRFTVEELRSIAINSPHLLSNNVITRPMMQEKLIPTLAFVGGPGEIAYWSALKDSFHLLELKMPPIVPRISFTYIDRYTSRLLDKYNLNVSEIISTGVNDHKRRFLDEKNNDNIDEVVEEVKAQISDIHKPLRDISASMGDDIKALSESNLSYILNDVEFLRKRLNNEIRKTYAKEISEFDRMEMILRPNNGLQERIWNPIYIMNCCGVDVFTEMVNNHTFVQEEHWIIHL.

A coiled-coil region spans residues 419 to 440; the sequence is DEKNNDNIDEVVEEVKAQISDI.

Belongs to the BshC family.

Involved in bacillithiol (BSH) biosynthesis. May catalyze the last step of the pathway, the addition of cysteine to glucosamine malate (GlcN-Mal) to generate BSH. This is Putative cysteine ligase BshC from Oceanobacillus iheyensis (strain DSM 14371 / CIP 107618 / JCM 11309 / KCTC 3954 / HTE831).